Here is a 215-residue protein sequence, read N- to C-terminus: Pyrrolidone-carboxylate peptidase (215 aa).

Residues Glu78, Cys141, and His165 contribute to the active site.

Belongs to the peptidase C15 family. As to quaternary structure, homotetramer.

The protein localises to the cytoplasm. It carries out the reaction Release of an N-terminal pyroglutamyl group from a polypeptide, the second amino acid generally not being Pro.. In terms of biological role, removes 5-oxoproline from various penultimate amino acid residues except L-proline. The polypeptide is Pyrrolidone-carboxylate peptidase (Streptococcus suis (strain 98HAH33)).